A 447-amino-acid chain; its full sequence is D-ribitol-5-phosphate cytidylyltransferase (447 aa).

This sequence belongs to the IspD/TarI cytidylyltransferase family. IspD subfamily. Homodimer.

The protein localises to the cytoplasm. It is found in the cytosol. The enzyme catalyses D-ribitol 5-phosphate + CTP + H(+) = CDP-L-ribitol + diphosphate. It catalyses the reaction D-ribose 5-phosphate + CTP + H(+) = CDP-D-ribose + diphosphate. The catalysed reaction is D-ribulose 5-phosphate + CTP + H(+) = CDP-D-ribulose + diphosphate. The protein operates within protein modification; protein glycosylation. Cytidylyltransferase required for protein O-linked mannosylation. Catalyzes the formation of CDP-ribitol nucleotide sugar from D-ribitol 5-phosphate. CDP-ribitol is a substrate of FKTN during the biosynthesis of the phosphorylated O-mannosyl trisaccharide (N-acetylgalactosamine-beta-3-N-acetylglucosamine-beta-4-(phosphate-6-)mannose), a carbohydrate structure present in alpha-dystroglycan (DAG1), which is required for binding laminin G-like domain-containing extracellular proteins with high affinity. Shows activity toward other pentose phosphate sugars and mediates formation of CDP-ribulose or CDP-ribose using CTP and ribulose-5-phosphate or ribose-5-phosphate, respectively. Not involved in dolichol production. In Mus musculus (Mouse), this protein is D-ribitol-5-phosphate cytidylyltransferase (Crppa).